The sequence spans 312 residues: Protein lon-1 (312 aa).

Positions methionine 1–alanine 18 are cleaved as a signal peptide. Residues glutamate 87–tyrosine 209 enclose the SCP domain. An N-linked (GlcNAc...) asparagine glycan is attached at asparagine 142. Low complexity predominate over residues threonine 265–cysteine 284. Positions threonine 265–valine 312 are disordered. Residues glutamate 285–asparagine 305 are compositionally biased toward acidic residues.

Belongs to the CRISP family. In terms of tissue distribution, expressed in hypodermal tissues.

In terms of biological role, regulates body size morphogenesis, but does not affect male tail development. This is Protein lon-1 (lon-1) from Caenorhabditis elegans.